The chain runs to 378 residues: MAANRDYYDVLGVSRDASDAEISKAYRKLAKKYHPDLNHEAGAEEKYKEVNEAYEVLHDPQKRQQYDQFGQAGMNGQGGFGGQYGGQGFGGADFGDFGDIFSSFFGGARQQVDPTAPQRGADLDYTMTIDFMDAIKGKTSEISYSRSTTCEVCKGSGAEKGTHPITCDKCGGSGMMTITQRSVLGMIQRQTTCDKCAGSGVIIQHPCHNCHGKGVKTQKQTLQVKVPAGIDNGQQIRLAGQGEAGKNGGPYGDLYIVFRVRPSKDFTRRGQTIYTTVPISFAQATLGDEINVKTVYGDTKLKIPAGTQPNQKFTLKEKGVPSLRGGSTGDQVTTVEIVIPKSINEAQRKALLEFVKASGGSIAPQEKGFFERLKEKLS.

The J domain occupies 6-70; sequence DYYDVLGVSR…QKRQQYDQFG (65 aa). The CR-type zinc-finger motif lies at 137–219; that stretch reads GKTSEISYSR…CHGKGVKTQK (83 aa). Cys150, Cys153, Cys167, Cys170, Cys193, Cys196, Cys207, and Cys210 together coordinate Zn(2+). 4 CXXCXGXG motif repeats span residues 150-157, 167-174, 193-200, and 207-214; these read CEVCKGSG, CDKCGGSG, CDKCAGSG, and CHNCHGKG.

Belongs to the DnaJ family. Homodimer. Zn(2+) is required as a cofactor.

The protein localises to the cytoplasm. In terms of biological role, participates actively in the response to hyperosmotic and heat shock by preventing the aggregation of stress-denatured proteins and by disaggregating proteins, also in an autonomous, DnaK-independent fashion. Unfolded proteins bind initially to DnaJ; upon interaction with the DnaJ-bound protein, DnaK hydrolyzes its bound ATP, resulting in the formation of a stable complex. GrpE releases ADP from DnaK; ATP binding to DnaK triggers the release of the substrate protein, thus completing the reaction cycle. Several rounds of ATP-dependent interactions between DnaJ, DnaK and GrpE are required for fully efficient folding. Also involved, together with DnaK and GrpE, in the DNA replication of plasmids through activation of initiation proteins. This chain is Chaperone protein DnaJ, found in Lactobacillus delbrueckii subsp. bulgaricus (strain ATCC BAA-365 / Lb-18).